Here is a 459-residue protein sequence, read N- to C-terminus: MTETVTTTSSDKSEKKNYLFYTSPNHRPPTVVRAEGVYLYLEDGTRIMDATGGAAVACLGHGNKEVIDAMHKQSEKVCYIHSMGFSNEPADKLANLLVSEHPDVFARAYFANSGSEAVETCLKLILQYWQLVGEKQRCHIIARKQGYHGNTLFALSVGGMKPRKQPYEGVFSHTTSHVSPCFEYRYKENGETTEEYVARLAKELEDEILRVGPEKVAAFVAETVSGACTGCATPVPGYFKAMRKVCDKYGVIFYLDEVMSGIGRTGTMHAWEQEGVTPDIQSIAKCLGGGYQPISGALVGHRIMNVFEQKDAAMAGFFTYQAHPIACSAALAVQTILRRDHLVERAAEMGKYLSEKLHETFDSHPNVGNIRGRGLFWGLEIVKDKATKECFPPEYKVGSLANKIGCEHGVFVYPGMGTIDGTRGDHVLLAPPYIITREQIDELVEALSKTITSTVAALP.

Lysine 285 carries the post-translational modification N6-(pyridoxal phosphate)lysine.

It belongs to the class-III pyridoxal-phosphate-dependent aminotransferase family.

The protein localises to the cytoplasm. This is an uncharacterized protein from Schizosaccharomyces pombe (strain 972 / ATCC 24843) (Fission yeast).